We begin with the raw amino-acid sequence, 647 residues long: UvrABC system protein C (647 aa).

The GIY-YIG domain occupies 16–95 (VEPGVYRFRD…IKEFDPRFNI (80 aa)). The region spanning 208-243 (DRYARDLERKMSAAAEQLDFERAARLRDDLFALKRA) is the UVR domain.

The protein belongs to the UvrC family. Interacts with UvrB in an incision complex.

It is found in the cytoplasm. In terms of biological role, the UvrABC repair system catalyzes the recognition and processing of DNA lesions. UvrC both incises the 5' and 3' sides of the lesion. The N-terminal half is responsible for the 3' incision and the C-terminal half is responsible for the 5' incision. This Mycobacterium leprae (strain Br4923) protein is UvrABC system protein C.